The primary structure comprises 210 residues: Coatomer subunit zeta-2 (210 aa).

Residues Met1–Pro12 show a composition bias toward basic and acidic residues. The segment at Met1–Ser34 is disordered. Low complexity predominate over residues Gly13 to Ser34.

It belongs to the adaptor complexes small subunit family. As to quaternary structure, oligomeric complex.

The protein localises to the cytoplasm. Its subcellular location is the endoplasmic reticulum-Golgi intermediate compartment membrane. It localises to the golgi apparatus membrane. The protein resides in the cytoplasmic vesicle. It is found in the COPI-coated vesicle membrane. Functionally, the coatomer is a cytosolic protein complex that binds to dilysine motifs and reversibly associates with Golgi non-clathrin-coated vesicles, which further mediate biosynthetic protein transport from the ER, via the Golgi up to the trans Golgi network. Coatomer complex is required for budding from Golgi membranes, and is essential for the retrograde Golgi-to-ER transport of dilysine-tagged proteins. The zeta subunit may be involved in regulating the coat assembly and, hence, the rate of biosynthetic protein transport due to its association-dissociation properties with the coatomer complex. The sequence is that of Coatomer subunit zeta-2 (COPZ2) from Homo sapiens (Human).